We begin with the raw amino-acid sequence, 422 residues long: Serine hydroxymethyltransferase (422 aa).

(6S)-5,6,7,8-tetrahydrofolate is bound by residues Leu-118 and 122-124; that span reads GHL. Lys-227 carries the post-translational modification N6-(pyridoxal phosphate)lysine. Residue Glu-242 coordinates (6S)-5,6,7,8-tetrahydrofolate.

It belongs to the SHMT family. As to quaternary structure, homodimer. Pyridoxal 5'-phosphate is required as a cofactor.

It localises to the cytoplasm. The enzyme catalyses (6R)-5,10-methylene-5,6,7,8-tetrahydrofolate + glycine + H2O = (6S)-5,6,7,8-tetrahydrofolate + L-serine. It functions in the pathway one-carbon metabolism; tetrahydrofolate interconversion. It participates in amino-acid biosynthesis; glycine biosynthesis; glycine from L-serine: step 1/1. Its function is as follows. Catalyzes the reversible interconversion of serine and glycine with tetrahydrofolate (THF) serving as the one-carbon carrier. This reaction serves as the major source of one-carbon groups required for the biosynthesis of purines, thymidylate, methionine, and other important biomolecules. Also exhibits THF-independent aldolase activity toward beta-hydroxyamino acids, producing glycine and aldehydes, via a retro-aldol mechanism. The polypeptide is Serine hydroxymethyltransferase (Sulfurihydrogenibium sp. (strain YO3AOP1)).